Consider the following 196-residue polypeptide: Molybdenum cofactor guanylyltransferase (196 aa).

Residues 10–12 (LAG), Lys23, Asn51, Asp69, and Asp99 each bind GTP. Asp99 is a binding site for Mg(2+).

It belongs to the MobA family. Monomer. Requires Mg(2+) as cofactor.

The protein resides in the cytoplasm. It carries out the reaction Mo-molybdopterin + GTP + H(+) = Mo-molybdopterin guanine dinucleotide + diphosphate. In terms of biological role, transfers a GMP moiety from GTP to Mo-molybdopterin (Mo-MPT) cofactor (Moco or molybdenum cofactor) to form Mo-molybdopterin guanine dinucleotide (Mo-MGD) cofactor. This is Molybdenum cofactor guanylyltransferase from Shewanella loihica (strain ATCC BAA-1088 / PV-4).